The chain runs to 336 residues: Ferredoxin--NADP reductase (336 aa).

7 residues coordinate FAD: D37, Q45, Y50, V90, F124, D286, and T327.

The protein belongs to the ferredoxin--NADP reductase type 2 family. As to quaternary structure, homodimer. FAD is required as a cofactor.

It carries out the reaction 2 reduced [2Fe-2S]-[ferredoxin] + NADP(+) + H(+) = 2 oxidized [2Fe-2S]-[ferredoxin] + NADPH. The polypeptide is Ferredoxin--NADP reductase (Enterococcus faecalis (strain ATCC 700802 / V583)).